A 198-amino-acid polypeptide reads, in one-letter code: NAD(P)H dehydrogenase (quinone) (198 aa).

Residues 4 to 189 (VLVLYYSMYG…ALARYQGRHV (186 aa)) enclose the Flavodoxin-like domain. FMN is bound by residues 10–15 (SMYGHV) and 78–80 (TRF). Tyr12 contacts NAD(+). Trp98 contributes to the substrate binding site. FMN contacts are provided by residues 113 to 118 (STGTGG) and His133.

It belongs to the WrbA family. Requires FMN as cofactor.

It catalyses the reaction a quinone + NADH + H(+) = a quinol + NAD(+). The catalysed reaction is a quinone + NADPH + H(+) = a quinol + NADP(+). The chain is NAD(P)H dehydrogenase (quinone) from Halorhodospira halophila (strain DSM 244 / SL1) (Ectothiorhodospira halophila (strain DSM 244 / SL1)).